Here is a 260-residue protein sequence, read N- to C-terminus: Proteasome subunit alpha (260 aa).

The protein belongs to the peptidase T1A family. In terms of assembly, the 20S proteasome core is composed of 14 alpha and 14 beta subunits that assemble into four stacked heptameric rings, resulting in a barrel-shaped structure. The two inner rings, each composed of seven catalytic beta subunits, are sandwiched by two outer rings, each composed of seven alpha subunits. The catalytic chamber with the active sites is on the inside of the barrel. Has a gated structure, the ends of the cylinder being occluded by the N-termini of the alpha-subunits. Is capped at one or both ends by the proteasome regulatory ATPase, PAN.

It localises to the cytoplasm. With respect to regulation, the formation of the proteasomal ATPase PAN-20S proteasome complex, via the docking of the C-termini of PAN into the intersubunit pockets in the alpha-rings, triggers opening of the gate for substrate entry. Interconversion between the open-gate and close-gate conformations leads to a dynamic regulation of the 20S proteasome proteolysis activity. Component of the proteasome core, a large protease complex with broad specificity involved in protein degradation. This is Proteasome subunit alpha from Thermococcus sp. (strain JCM 11816 / KS-1).